The chain runs to 170 residues: Large ribosomal subunit protein bL17 (170 aa).

The segment covering 134-144 (ASAKAAQAQEK) has biased composition (low complexity). Residues 134–170 (ASAKAAQAQEKPAQEEEVEATSDEVAYTSEPDKAAEH) form a disordered region.

Belongs to the bacterial ribosomal protein bL17 family. Part of the 50S ribosomal subunit. Contacts protein L32.

This chain is Large ribosomal subunit protein bL17, found in Mycobacterium leprae (strain Br4923).